Reading from the N-terminus, the 189-residue chain is Crossover junction endodeoxyribonuclease RuvC (189 aa).

Residues D7, E68, and D141 contribute to the active site. 3 residues coordinate Mg(2+): D7, E68, and D141.

Belongs to the RuvC family. As to quaternary structure, homodimer which binds Holliday junction (HJ) DNA. The HJ becomes 2-fold symmetrical on binding to RuvC with unstacked arms; it has a different conformation from HJ DNA in complex with RuvA. In the full resolvosome a probable DNA-RuvA(4)-RuvB(12)-RuvC(2) complex forms which resolves the HJ. The cofactor is Mg(2+).

The protein localises to the cytoplasm. It catalyses the reaction Endonucleolytic cleavage at a junction such as a reciprocal single-stranded crossover between two homologous DNA duplexes (Holliday junction).. Its function is as follows. The RuvA-RuvB-RuvC complex processes Holliday junction (HJ) DNA during genetic recombination and DNA repair. Endonuclease that resolves HJ intermediates. Cleaves cruciform DNA by making single-stranded nicks across the HJ at symmetrical positions within the homologous arms, yielding a 5'-phosphate and a 3'-hydroxyl group; requires a central core of homology in the junction. The consensus cleavage sequence is 5'-(A/T)TT(C/G)-3'. Cleavage occurs on the 3'-side of the TT dinucleotide at the point of strand exchange. HJ branch migration catalyzed by RuvA-RuvB allows RuvC to scan DNA until it finds its consensus sequence, where it cleaves and resolves the cruciform DNA. The protein is Crossover junction endodeoxyribonuclease RuvC of Nocardia farcinica (strain IFM 10152).